A 119-amino-acid polypeptide reads, in one-letter code: Protein phosphatase EYA3 (119 aa).

It belongs to the HAD-like hydrolase superfamily. EYA family. Mg(2+) is required as a cofactor.

The protein localises to the cytoplasm. The protein resides in the nucleus. The enzyme catalyses O-phospho-L-tyrosyl-[protein] + H2O = L-tyrosyl-[protein] + phosphate. In terms of biological role, tyrosine phosphatase that specifically dephosphorylates 'Tyr-142' of histone H2AX (H2AXY142ph). 'Tyr-142' phosphorylation of histone H2AX plays a central role in DNA repair and acts as a mark that distinguishes between apoptotic and repair responses to genotoxic stress. Promotes efficient DNA repair by dephosphorylating H2AX, promoting the recruitment of DNA repair complexes containing MDC1. Its function as histone phosphatase probably explains its role in transcription regulation during organogenesis. May be involved in development of the eye. This Gallus gallus (Chicken) protein is Protein phosphatase EYA3 (EYA3).